The chain runs to 143 residues: UPF0763 protein HH_0976 (143 aa).

It belongs to the UPF0763 family.

The sequence is that of UPF0763 protein HH_0976 from Helicobacter hepaticus (strain ATCC 51449 / 3B1).